The chain runs to 334 residues: Glyceraldehyde-3-phosphate dehydrogenase (334 aa).

NAD(+)-binding positions include 10 to 11 (RI), aspartate 33, lysine 77, and threonine 119. Residues 149-151 (SCT), threonine 180, 209-210 (TG), and arginine 232 contribute to the D-glyceraldehyde 3-phosphate site. Cysteine 150 serves as the catalytic Nucleophile. Asparagine 314 is a binding site for NAD(+).

This sequence belongs to the glyceraldehyde-3-phosphate dehydrogenase family. In terms of assembly, homotetramer.

It localises to the cytoplasm. It catalyses the reaction D-glyceraldehyde 3-phosphate + phosphate + NAD(+) = (2R)-3-phospho-glyceroyl phosphate + NADH + H(+). Its pathway is carbohydrate degradation; glycolysis; pyruvate from D-glyceraldehyde 3-phosphate: step 1/5. Catalyzes the oxidative phosphorylation of glyceraldehyde 3-phosphate (G3P) to 1,3-bisphosphoglycerate (BPG) using the cofactor NAD. The first reaction step involves the formation of a hemiacetal intermediate between G3P and a cysteine residue, and this hemiacetal intermediate is then oxidized to a thioester, with concomitant reduction of NAD to NADH. The reduced NADH is then exchanged with the second NAD, and the thioester is attacked by a nucleophilic inorganic phosphate to produce BPG. The protein is Glyceraldehyde-3-phosphate dehydrogenase (gap) of Chlamydia trachomatis serovar L2 (strain ATCC VR-902B / DSM 19102 / 434/Bu).